The primary structure comprises 94 residues: Co-chaperonin GroES (94 aa).

The protein belongs to the GroES chaperonin family. As to quaternary structure, heptamer of 7 subunits arranged in a ring. Interacts with the chaperonin GroEL.

The protein localises to the cytoplasm. Functionally, together with the chaperonin GroEL, plays an essential role in assisting protein folding. The GroEL-GroES system forms a nano-cage that allows encapsulation of the non-native substrate proteins and provides a physical environment optimized to promote and accelerate protein folding. GroES binds to the apical surface of the GroEL ring, thereby capping the opening of the GroEL channel. This chain is Co-chaperonin GroES, found in Streptococcus pneumoniae (strain Taiwan19F-14).